The sequence spans 504 residues: MLGRQVTMLLKVIVAVAVLFVWHRSRDSSRGDGSNGDGLSDSSGNGFRLEHIWAYDPEDVVSSCVDVSEEMRVSADEYVSMESGSEFVESWWAKTGARPFSHVFDLRSRSMDIQRLQDRDPVSMEKYIDFSLENPELARTIELEWETAKIQVPDVRNRNTVLALALMSSNAYVRTPYTGDWRNLSSSWGHTGEEKFGWDKDGLRGHIFVNKITKVVVIAIKGTSSQGLFGSGEEDTITNDKINDNLLFSCCCARISYLWTTVCDCYMKSYTCDENCVEAELKRKDRYYAATLKLYKQVTEMYPDSAIWLTGHSLGGALAALLGRTYGVPAVTFEAPGELLPAKRLHLPLPPGLPDYEEAIWHFGHNADPIFMGTCNGASSSCSIGGYAMETACHSGQYCMYDVVNDKGWRVNLLNHRIHRVIDEVILEYGRPAKCQRAPTCIDCYNWKFVNKRRNRREESSSSIASSSQLTSSHSESETLTSTDAPEKTCIGRNWLGICTDYGV.

Met1 is a topological domain (cytoplasmic). Residues Leu2–Trp22 traverse the membrane as a helical; Signal-anchor for type II membrane protein segment. Residues His23–Val504 are Lumenal-facing. N-linked (GlcNAc...) asparagine glycosylation occurs at Asn183. The active-site Charge relay system is Ser313. The tract at residues Glu458–Asp484 is disordered. The span at Ser461–Thr483 shows a compositional bias: low complexity.

Belongs to the AB hydrolase superfamily. Lipase family. As to quaternary structure, binds to both phosphatidylinositol (PI) and phosphatidylinositol 3,5-bisphosphate (PIP2).

The protein localises to the endosome. It localises to the multivesicular body membrane. The protein resides in the prevacuolar compartment membrane. It carries out the reaction a triacylglycerol + H2O = a diacylglycerol + a fatty acid + H(+). Lipase which is essential for lysis of subvacuolar cytoplasm to vacuole targeted bodies and intravacuolar autophagic bodies. Involved in the lysis of intravacuolar multivesicular body (MVB) vesicles. The intravacuolar membrane disintegration by ATG15 is critical to life span extension. This Candida glabrata (strain ATCC 2001 / BCRC 20586 / JCM 3761 / NBRC 0622 / NRRL Y-65 / CBS 138) (Yeast) protein is Putative lipase ATG15 (ATG15).